The primary structure comprises 488 residues: Annexin A7 (488 aa).

Residues 1-18 (MSYPGYPPTGYPPFPGYP) show a composition bias toward pro residues. Disordered stretches follow at residues 1-49 (MSYP…YPQV) and 71-150 (GYPG…NTES). Residues 1-143 (MSYPGYPPTG…QYPGGQPTYP (143 aa)) are repeat-rich region. The 3 X 5 AA tandem repeats of G-Y-P-P-X stretch occupies residues 5 to 20 (GYPPTGYPPFPGYPPA). Residues 89-102 (PGQGFGVPPGGAGF) are compositionally biased toward gly residues. Annexin repeat units lie at residues 185 to 256 (FDAM…ALFM), 257 to 328 (PPTY…SMCQ), 340 to 412 (QMAQ…TILQ), and 416 to 487 (NRPA…AIVG). Lys233 carries the post-translational modification N6-acetyllysine.

The protein belongs to the annexin family. Interacts with PDCD6.

Calcium/phospholipid-binding protein which promotes membrane fusion and is involved in exocytosis. This chain is Annexin A7 (ANXA7), found in Macaca fascicularis (Crab-eating macaque).